Reading from the N-terminus, the 610-residue chain is Methionine--tRNA ligase (610 aa).

Positions 12–22 (PYANGPRHIGH) match the 'HIGH' region motif. The Zn(2+) site is built by cysteine 144, cysteine 147, cysteine 157, and cysteine 160. Positions 348–352 (KFSSS) match the 'KMSKS' region motif. Serine 351 provides a ligand contact to ATP.

This sequence belongs to the class-I aminoacyl-tRNA synthetase family. MetG type 1 subfamily. Monomer. Zn(2+) is required as a cofactor.

The protein resides in the cytoplasm. It carries out the reaction tRNA(Met) + L-methionine + ATP = L-methionyl-tRNA(Met) + AMP + diphosphate. Is required not only for elongation of protein synthesis but also for the initiation of all mRNA translation through initiator tRNA(fMet) aminoacylation. The polypeptide is Methionine--tRNA ligase (Corynebacterium glutamicum (strain R)).